Reading from the N-terminus, the 90-residue chain is Small ribosomal subunit protein bS20 (90 aa).

The protein belongs to the bacterial ribosomal protein bS20 family.

Functionally, binds directly to 16S ribosomal RNA. The protein is Small ribosomal subunit protein bS20 of Rickettsia akari (strain Hartford).